The sequence spans 642 residues: Chaperone protein DnaK (642 aa).

T200 carries the phosphothreonine; by autocatalysis modification. Residues 603-623 (AAAAEQGGNADAASGNAQASK) are compositionally biased toward low complexity. The disordered stretch occupies residues 603–627 (AAAAEQGGNADAASGNAQASKAADD).

It belongs to the heat shock protein 70 family.

Its function is as follows. Acts as a chaperone. The chain is Chaperone protein DnaK from Xanthomonas campestris pv. campestris (strain B100).